We begin with the raw amino-acid sequence, 228 residues long: Putative lipoprotein LprH (228 aa).

An N-terminal signal peptide occupies residues 1–27 (MACLGRPGCRGWAGASLVLVVVLALAA). Cysteine 28 carries N-palmitoyl cysteine lipidation. Cysteine 28 carries the S-diacylglycerol cysteine lipid modification. Residues 191 to 211 (GLAVVPHAVLVLSACGFKPGF) form a helical membrane-spanning segment.

The protein resides in the cell membrane. The polypeptide is Putative lipoprotein LprH (lprH) (Mycobacterium bovis (strain ATCC BAA-935 / AF2122/97)).